The primary structure comprises 206 residues: Large ribosomal subunit protein uL4 (206 aa).

Positions 46-77 (GTRAQKDREQVKHSTKKPFKQKGTGNARAGMT) are disordered.

It belongs to the universal ribosomal protein uL4 family. In terms of assembly, part of the 50S ribosomal subunit.

Its function is as follows. One of the primary rRNA binding proteins, this protein initially binds near the 5'-end of the 23S rRNA. It is important during the early stages of 50S assembly. It makes multiple contacts with different domains of the 23S rRNA in the assembled 50S subunit and ribosome. Functionally, forms part of the polypeptide exit tunnel. The protein is Large ribosomal subunit protein uL4 of Acidovorax ebreus (strain TPSY) (Diaphorobacter sp. (strain TPSY)).